The primary structure comprises 941 residues: Pre-mRNA-processing factor 6 (941 aa).

Residues 1–79 are disordered; sequence MNKKKKPFLG…DEDLNDTNYD (79 aa). Residues 39 to 65 show a composition bias toward basic and acidic residues; sequence DANDPVDDRHAPPGKRTVGDQMKKNQA. Positions 66-78 are enriched in acidic residues; that stretch reads ADDDDEDLNDTNY. A Phosphoserine modification is found at Ser-143. Thr-180, Thr-266, and Thr-275 each carry phosphothreonine. Residue Ser-279 is modified to Phosphoserine. HAT repeat units lie at residues 384 to 416, 418 to 444, 445 to 476, 554 to 586, 588 to 620, 622 to 654, 689 to 721, 723 to 755, and 855 to 887; these read TDIR…LEEP, DARI…ARLE, TYEN…LEEA, NALE…FEKN, GTRE…SKWL, GDVP…LESE, GNIT…IEEQ, ELME…LEEK, and RKIT…FELQ.

Identified in the spliceosome B complex. Identified in the spliceosome C complex. Associates with the U5 snRNP particle. Component of the U4/U6-U5 tri-snRNP complex composed of the U4, U6 and U5 snRNAs and at least PRPF3, PRPF4, PRPF6, PRPF8, PRPF31, SNRNP200, TXNL4A, SNRNP40, DDX23, CD2BP2, PPIH, SNU13, EFTUD2, SART1 and USP39, LSm proteins LSm2-8 and Sm proteins. Interacts with ARAF1. Interacts with AR and NR3C1, but not ESR1, independently of the presence of hormones. Interacts with USH1G. Post-translationally, phosphorylated by PRP4K during spliceosome assembly.

The protein resides in the nucleus. It localises to the nucleoplasm. The protein localises to the nucleus speckle. Involved in pre-mRNA splicing as component of the U4/U6-U5 tri-snRNP complex, one of the building blocks of the spliceosome. Enhances dihydrotestosterone-induced transactivation activity of AR, as well as dexamethasone-induced transactivation activity of NR3C1, but does not affect estrogen-induced transactivation. This Rattus norvegicus (Rat) protein is Pre-mRNA-processing factor 6 (Prpf6).